Reading from the N-terminus, the 366-residue chain is Glucose 1-dehydrogenase (366 aa).

Cys-39 lines the Zn(2+) pocket. Position 41 (Thr-41) interacts with substrate. 2 residues coordinate Zn(2+): His-66 and Glu-67. Asn-89 is a substrate binding site. Residues Cys-93, Cys-96, Cys-99, and Cys-107 each coordinate Zn(2+). Substrate contacts are provided by Glu-114, Gln-150, and Asp-154. Gln-150 lines the Zn(2+) pocket. Residues 189–192 (TGPI), 211–213 (NRR), 277–279 (FGF), 305–307 (LVN), and Lys-354 contribute to the NADP(+) site. Asn-307 serves as a coordination point for substrate.

Belongs to the zinc-containing alcohol dehydrogenase family. Glucose 1-dehydrogenase subfamily. As to quaternary structure, homotetramer. It depends on Zn(2+) as a cofactor.

It catalyses the reaction D-glucose + NAD(+) = D-glucono-1,5-lactone + NADH + H(+). It carries out the reaction D-glucose + NADP(+) = D-glucono-1,5-lactone + NADPH + H(+). The catalysed reaction is D-galactose + NAD(+) = D-galactono-1,4-lactone + NADH + H(+). The enzyme catalyses D-galactose + NADP(+) = D-galactono-1,5-lactone + NADPH + H(+). It catalyses the reaction an aldopyranose + NAD(+) = aldono-1,5-lactone + NADH + H(+). It carries out the reaction an aldopyranose + NADP(+) = aldono-1,5-lactone + NADPH + H(+). Its activity is regulated as follows. Inhibited by EDTA in vitro. Its function is as follows. Catalyzes the NAD(P)(+)-dependent oxidation of D-glucose to D-gluconate via gluconolactone. Displays broad substrate specificity since it is able to catalyze the oxidation of a number of alternative aldose sugars, such as D-galactose, D-xylose and L-arabinose, to the corresponding glyconate. Can utilize both NAD(+) and NADP(+) as electron acceptor. Physiologically, seems to be involved in the degradation of both glucose and galactose through a non-phosphorylative variant of the Entner-Doudoroff pathway. The chain is Glucose 1-dehydrogenase from Saccharolobus solfataricus (Sulfolobus solfataricus).